A 237-amino-acid chain; its full sequence is DNA repair protein RecO (237 aa).

Belongs to the RecO family.

Involved in DNA repair and RecF pathway recombination. This Rickettsia africae (strain ESF-5) protein is DNA repair protein RecO.